A 158-amino-acid chain; its full sequence is Protein ORF4 (158 aa).

Functionally, acts by interacting with multiple viral and host proteins to enhance the activity of viral RNA-dependent RNA polymerase. The protein is Protein ORF4 of Hepatitis E virus genotype 1 (isolate Human/Pakistan/Sar-55) (HEV-1).